The sequence spans 476 residues: Dermokine (476 aa).

An N-terminal signal peptide occupies residues 1–21; the sequence is MKFQGPLACLLLALCLGSGEA. 4 stretches are compositionally biased toward gly residues: residues 153–169, 193–202, 236–259, and 268–298; these read SQGGLGGQGQGNPGGLG, WGQGGNGGPP, GSGGGSSNSGGGSGSQSGSSGSGS, and SSGGSSSGSSSGGSSGGSSGGSSGNSGGSRG. The tract at residues 153-351 is disordered; it reads SQGGLGGQGQ…ESGIQNSETS (199 aa). Low complexity predominate over residues 299 to 315; the sequence is DSGSESSWGSSTGSSSG. Residues 316-326 show a composition bias toward gly residues; it reads NHGGSGGGNGH.

Belongs to the dermokine family. Homooligomer. Seems to be able to homodimerize and homotrimerize. Post-translationally, O-glycosylated. As to expression, expressed in epidermis; in the spinous and granular layers and in placenta. Also found in the epithelia of the small intestine, macrophages of the lung and endothelial cells of the lung. Isoform 15 is expressed in epidermis and placenta. Isoform 1 is expressed in epidermis.

Its subcellular location is the secreted. Its function is as follows. May act as a soluble regulator of keratinocyte differentiation. This is Dermokine (DMKN) from Homo sapiens (Human).